Here is a 926-residue protein sequence, read N- to C-terminus: Thyroid peroxidase (926 aa).

A signal peptide spans 1-14 (MGARAVLGVTLAVA). Topologically, residues 19 to 844 (FFASILRRKD…TCVDAGRLPR (826 aa)) are extracellular. The N-linked (GlcNAc...) asparagine glycan is linked to asparagine 129. A disulfide bond links cysteine 142 and cysteine 158. Aspartate 238 is a heme b binding site. The active-site Proton acceptor is the histidine 239. Position 240 (aspartate 240) interacts with Ca(2+). Cystine bridges form between cysteine 259–cysteine 269 and cysteine 263–cysteine 286. 2 N-linked (GlcNAc...) asparagine glycosylation sites follow: asparagine 277 and asparagine 307. Residues threonine 321, phenylalanine 323, aspartate 325, and serine 327 each coordinate Ca(2+). A glycan (N-linked (GlcNAc...) asparagine) is linked at asparagine 342. 2 residues coordinate heme b: glutamate 398 and histidine 493. Disulfide bonds link cysteine 596–cysteine 653, cysteine 694–cysteine 719, cysteine 740–cysteine 780, cysteine 766–cysteine 792, cysteine 798–cysteine 812, cysteine 806–cysteine 821, and cysteine 823–cysteine 836. One can recognise a Sushi domain in the interval 738–793 (DACGFPDPVEDGGFLLCEERGQRVLVFSCRHGFRLRGPAQITCTPRGWDSPPPLCK). In terms of domain architecture, EGF-like; calcium-binding spans 794–837 (DINECEDETDPPCHASARCKNTKGGVLCECSDPLVLGEDGRTCV). The chain crosses the membrane as a helical span at residues 845 to 869 (ASVVSIALGAVLVCGLAGLAWTVVC). At 870-926 (RWTHADARPLLPVGEGEGDGKSPSLPLPGCGNRRDVGAAPALEVEQDLSCGSRGLCE) the chain is on the cytoplasmic side.

This sequence belongs to the peroxidase family. XPO subfamily. In terms of assembly, interacts with DUOX1, DUOX2 and CYBA. The cofactor is Ca(2+). Heme b serves as cofactor. In terms of processing, heme is covalently bound through a H(2)O(2)-dependent autocatalytic process. Heme insertion is important for the delivery of protein at the cell surface. Cleaved in its N-terminal part. Post-translationally, N-glycosylated; contains mannose and N-acetylglucosamine.

The protein localises to the membrane. It catalyses the reaction 2 iodide + H2O2 + 2 H(+) = diiodine + 2 H2O. It carries out the reaction [thyroglobulin]-L-tyrosine + iodide + H2O2 + H(+) = [thyroglobulin]-3-iodo-L-tyrosine + 2 H2O. The enzyme catalyses [thyroglobulin]-3-iodo-L-tyrosine + iodide + H2O2 + H(+) = [thyroglobulin]-3,5-diiodo-L-tyrosine + 2 H2O. The catalysed reaction is 2 [thyroglobulin]-3,5-diiodo-L-tyrosine + H2O2 = [thyroglobulin]-L-thyroxine + [thyroglobulin]-dehydroalanine + 2 H2O. It catalyses the reaction [thyroglobulin]-3-iodo-L-tyrosine + [thyroglobulin]-3,5-diiodo-L-tyrosine + H2O2 = [thyroglobulin]-3,3',5-triiodo-L-thyronine + [thyroglobulin]-dehydroalanine + 2 H2O. It participates in hormone biosynthesis; thyroid hormone biosynthesis. Functionally, iodination and coupling of the hormonogenic tyrosines in thyroglobulin to yield the thyroid hormones T(3) and T(4). In Sus scrofa (Pig), this protein is Thyroid peroxidase (TPO).